The primary structure comprises 548 residues: Telomerase Cajal body protein 1 (548 aa).

Positions 1 to 142 (MKTLETQPLA…SGEPAAEDEG (142 aa)) are disordered. Residues 15–31 (PSDQDPAPAHPSPHASP) are compositionally biased toward low complexity. Residues S26, S30, and S54 each carry the phosphoserine modification. S64 is modified (phosphoserine; by ATM). Phosphoserine is present on residues S85, S90, S112, and S114. 6 WD repeats span residues 167–206 (QPEN…YHEG), 222–267 (EGDT…LRAS), 272–313 (NHLD…RDCE), 323–364 (GQSG…ALLG), 365–405 (GHQG…YPLW), and 411–450 (VTTN…NDGK). T489 bears the Phosphothreonine mark. Residue S491 is modified to Phosphoserine. A disordered region spans residues 526-548 (SIPDDHQGEKGQGGTEGGVGELI). The segment covering 535 to 548 (KGQGGTEGGVGELI) has biased composition (gly residues).

This sequence belongs to the TCAB1 family. As to quaternary structure, component of the telomerase holoenzyme complex composed of one molecule of TERT, one molecule of WRAP53/TCAB1, two molecules of H/ACA ribonucleoprotein complex subunits DKC1, NOP10, NHP2 and GAR1, and a telomerase RNA template component (TERC). The telomerase holoenzyme complex is associated with TEP1, SMG6/EST1A and POT1. Interacts with the chaperonin-containing T-complex (TRiC) complex; which mediates the folding of WRAP53/TCAB1. Interacts with COIL. Interacts with SMN1. Interacts with RNF8. Interacts with histone H2AX. Phosphorylated at Ser-64 by ATM in response to DNA damage, promoting its interaction with histone H2AX and localization to sites of DNA double-strand breaks. In terms of tissue distribution, expressed in all tissues and cell lines examined.

It localises to the nucleus. Its subcellular location is the cajal body. It is found in the chromosome. The protein resides in the telomere. In terms of biological role, RNA chaperone that plays a key role in telomere maintenance and RNA localization to Cajal bodies. Specifically recognizes and binds the Cajal body box (CAB box) present in both small Cajal body RNAs (scaRNAs) and telomerase RNA template component (TERC). Essential component of the telomerase holoenzyme complex, a ribonucleoprotein complex essential for the replication of chromosome termini that elongates telomeres in most eukaryotes. In the telomerase holoenzyme complex, required to stimulate the catalytic activity of the complex. Acts by specifically binding the CAB box of the TERC RNA and controlling the folding of the CR4/CR5 region of the TERC RNA, a critical step for telomerase activity. In addition, also controls telomerase holoenzyme complex localization to Cajal body. During S phase, required for delivery of TERC to telomeres during S phase and for telomerase activity. In addition to its role in telomere maintenance, also required for Cajal body formation, probably by mediating localization of scaRNAs to Cajal bodies. Also plays a role in DNA repair: phosphorylated by ATM in response to DNA damage and relocalizes to sites of DNA double-strand breaks to promote the repair of DNA double-strand breaks. Acts by recruiting the ubiquitin ligase RNF8 to DNA breaks and promote both homologous recombination (HR) and non-homologous end joining (NHEJ). The protein is Telomerase Cajal body protein 1 of Homo sapiens (Human).